Consider the following 346-residue polypeptide: Nucleoplasmin-like protein ANO39 (346 aa).

The residue at position 2 (serine 2) is an N-acetylserine. Asparagine 85 is a glycosylation site (N-linked (GlcNAc...) asparagine). Residues 123-141 (DEEELEEDDEEEEEEDEVE) show a composition bias toward acidic residues. The disordered stretch occupies residues 123–285 (DEEELEEDDE…KAKAKTDTKL (163 aa)). Position 145 is a phosphoserine; by CDC2 (serine 145). Over residues 171–180 (AKLDKDADKK) the composition is skewed to basic and acidic residues. Residues 181 to 247 (EDDDEEEDDE…EEEEDEDEES (67 aa)) show a composition bias toward acidic residues. The N-linked (GlcNAc...) asparagine glycan is linked to asparagine 264. Over residues 271–285 (GDNKPKAKAKTDTKL) the composition is skewed to basic and acidic residues.

This sequence belongs to the nucleoplasmin family. In terms of processing, phosphorylation occurs in oocytes during the progression of the first meiotic M phase. No phosphorylation is observed in immature oocytes. In terms of tissue distribution, expressed specifically in the oocytes of the ovaries.

The protein resides in the nucleus. It localises to the nucleolus. The protein localises to the cytoplasm. Functionally, binds double-stranded RNA and both single-stranded and double-stranded DNA. The polypeptide is Nucleoplasmin-like protein ANO39 (Patiria pectinifera (Starfish)).